The following is a 346-amino-acid chain: Holliday junction branch migration complex subunit RuvB (346 aa).

The large ATPase domain (RuvB-L) stretch occupies residues 1–181; the sequence is MSDRNPLIDA…FGIPTRLNFY (181 aa). Residues leucine 20, arginine 21, glycine 62, lysine 65, threonine 66, threonine 67, 128–130, arginine 171, tyrosine 181, and arginine 218 contribute to the ATP site; that span reads EDF. Threonine 66 lines the Mg(2+) pocket. The interval 182–252 is small ATPAse domain (RuvB-S); it reads TVEELEYIVR…IADEALSRLE (71 aa). The interval 255-346 is head domain (RuvB-H); that stretch reads NRGLDQLDRR…SQYGLFMEDE (92 aa). Arginine 291, arginine 310, and arginine 315 together coordinate DNA.

Belongs to the RuvB family. In terms of assembly, homohexamer. Forms an RuvA(8)-RuvB(12)-Holliday junction (HJ) complex. HJ DNA is sandwiched between 2 RuvA tetramers; dsDNA enters through RuvA and exits via RuvB. An RuvB hexamer assembles on each DNA strand where it exits the tetramer. Each RuvB hexamer is contacted by two RuvA subunits (via domain III) on 2 adjacent RuvB subunits; this complex drives branch migration. In the full resolvosome a probable DNA-RuvA(4)-RuvB(12)-RuvC(2) complex forms which resolves the HJ.

The protein localises to the cytoplasm. The catalysed reaction is ATP + H2O = ADP + phosphate + H(+). Its function is as follows. The RuvA-RuvB-RuvC complex processes Holliday junction (HJ) DNA during genetic recombination and DNA repair, while the RuvA-RuvB complex plays an important role in the rescue of blocked DNA replication forks via replication fork reversal (RFR). RuvA specifically binds to HJ cruciform DNA, conferring on it an open structure. The RuvB hexamer acts as an ATP-dependent pump, pulling dsDNA into and through the RuvAB complex. RuvB forms 2 homohexamers on either side of HJ DNA bound by 1 or 2 RuvA tetramers; 4 subunits per hexamer contact DNA at a time. Coordinated motions by a converter formed by DNA-disengaged RuvB subunits stimulates ATP hydrolysis and nucleotide exchange. Immobilization of the converter enables RuvB to convert the ATP-contained energy into a lever motion, pulling 2 nucleotides of DNA out of the RuvA tetramer per ATP hydrolyzed, thus driving DNA branch migration. The RuvB motors rotate together with the DNA substrate, which together with the progressing nucleotide cycle form the mechanistic basis for DNA recombination by continuous HJ branch migration. Branch migration allows RuvC to scan DNA until it finds its consensus sequence, where it cleaves and resolves cruciform DNA. The sequence is that of Holliday junction branch migration complex subunit RuvB from Brucella anthropi (strain ATCC 49188 / DSM 6882 / CCUG 24695 / JCM 21032 / LMG 3331 / NBRC 15819 / NCTC 12168 / Alc 37) (Ochrobactrum anthropi).